Consider the following 201-residue polypeptide: ATP-dependent Clp protease proteolytic subunit 2 (201 aa).

Residue serine 100 is the Nucleophile of the active site. Residue histidine 125 is part of the active site.

The protein belongs to the peptidase S14 family. In terms of assembly, fourteen ClpP subunits assemble into 2 heptameric rings which stack back to back to give a disk-like structure with a central cavity, resembling the structure of eukaryotic proteasomes.

The protein localises to the cytoplasm. The catalysed reaction is Hydrolysis of proteins to small peptides in the presence of ATP and magnesium. alpha-casein is the usual test substrate. In the absence of ATP, only oligopeptides shorter than five residues are hydrolyzed (such as succinyl-Leu-Tyr-|-NHMec, and Leu-Tyr-Leu-|-Tyr-Trp, in which cleavage of the -Tyr-|-Leu- and -Tyr-|-Trp bonds also occurs).. Cleaves peptides in various proteins in a process that requires ATP hydrolysis. Has a chymotrypsin-like activity. Plays a major role in the degradation of misfolded proteins. This is ATP-dependent Clp protease proteolytic subunit 2 from Corynebacterium glutamicum (strain ATCC 13032 / DSM 20300 / JCM 1318 / BCRC 11384 / CCUG 27702 / LMG 3730 / NBRC 12168 / NCIMB 10025 / NRRL B-2784 / 534).